A 432-amino-acid polypeptide reads, in one-letter code: Glutamate-1-semialdehyde 2,1-aminomutase 1 (432 aa).

Lysine 272 carries the post-translational modification N6-(pyridoxal phosphate)lysine.

Belongs to the class-III pyridoxal-phosphate-dependent aminotransferase family. HemL subfamily. As to quaternary structure, homodimer. The cofactor is pyridoxal 5'-phosphate.

The protein localises to the cytoplasm. It catalyses the reaction (S)-4-amino-5-oxopentanoate = 5-aminolevulinate. It participates in porphyrin-containing compound metabolism; protoporphyrin-IX biosynthesis; 5-aminolevulinate from L-glutamyl-tRNA(Glu): step 2/2. The protein is Glutamate-1-semialdehyde 2,1-aminomutase 1 of Exiguobacterium sibiricum (strain DSM 17290 / CCUG 55495 / CIP 109462 / JCM 13490 / 255-15).